Here is a 694-residue protein sequence, read N- to C-terminus: Cyclic nucleotide-gated channel beta-3 (694 aa).

Topologically, residues 1–210 (MLKSLTVKFN…SIDSYTDRVY (210 aa)) are cytoplasmic. Disordered regions lie at residues 24–82 (CPNL…DPEC) and 146–177 (ENFP…KEHQ). Polar residues-rich tracts occupy residues 26–40 (NLSS…QGDN) and 153–168 (ASSQ…PKQE). Residues 211 to 234 (LLWLLLVTIAYNWNCWLLPVRLVF) form a helical membrane-spanning segment. At 235–241 (PCQTPDN) the chain is on the extracellular side. Residues 242–262 (KNYWIITDIVCDIIYLCDILL) traverse the membrane as a helical segment. Topologically, residues 263–291 (IQPRLQFVRGGEIIVDSNELKRNYRSSTK) are cytoplasmic. Residues 292–309 (FRMDVASLLPFEVLYIFF) form a helical membrane-spanning segment. Residues 310–312 (GVN) are Extracellular-facing. A helical membrane pass occupies residues 313-327 (PIFRANRILKYTSFF). The Cytoplasmic portion of the chain corresponds to 328 to 340 (EFNHHLESIMDKA). The interval 340–439 (AYVYRVIRTT…IGQMRDVIGA (100 aa)) is ion conduction pathway. Residues 341–363 (YVYRVIRTTGYLLFLLHINACVY) traverse the membrane as a helical segment. Residues 364–385 (YWASDYEGIGSTKWVYNGEGNK) are Extracellular-facing. 2 consecutive transmembrane segments (helical) span residues 386-412 (YLRC…SFEI) and 413-437 (VFQF…RDVI). Positions 399–402 (TIGG) are selectivity filter. At 438–694 (GAATANQNYF…KGKRKTTTQK (257 aa)) the chain is on the cytoplasmic side. The C-linker stretch occupies residues 442-518 (ANQNYFQACM…SIIDKVELFK (77 aa)). Positions 522-638 (TQMIYDLLLR…LLMKKAKILL (117 aa)) are cyclic nucleotide-binding domain. The 3',5'-cyclic GMP site is built by Gly-583, Glu-584, Arg-596, and Thr-597.

It belongs to the cyclic nucleotide-gated cation channel (TC 1.A.1.5) family. CNGB3 subfamily. In terms of assembly, forms heterotetrameric channels composed of CNGA3 and CNGB3 subunits with 3:1 stoichiometry. In terms of tissue distribution, small subset of retinal photoreceptor cells and testis.

Its subcellular location is the cell membrane. The enzyme catalyses Ca(2+)(in) = Ca(2+)(out). The catalysed reaction is Na(+)(in) = Na(+)(out). It carries out the reaction K(+)(in) = K(+)(out). It catalyses the reaction NH4(+)(in) = NH4(+)(out). The enzyme catalyses Rb(+)(in) = Rb(+)(out). The catalysed reaction is Li(+)(in) = Li(+)(out). It carries out the reaction Cs(+)(in) = Cs(+)(out). Pore-forming subunit of the cone cyclic nucleotide-gated channel. Mediates cone photoresponses at bright light converting transient changes in intracellular cGMP levels into electrical signals. In the dark, cGMP levels are high and keep the channel open enabling a steady inward current carried by Na(+) and Ca(2+) ions that leads to membrane depolarization and neurotransmitter release from synaptic terminals. Upon photon absorption cGMP levels decline leading to channel closure and membrane hyperpolarization that ultimately slows neurotransmitter release and signals the presence of light, the end point of the phototransduction cascade. Conducts cGMP- and cAMP-gated ion currents, with permeability for monovalent and divalent cations. The sequence is that of Cyclic nucleotide-gated channel beta-3 from Mus musculus (Mouse).